An 811-amino-acid polypeptide reads, in one-letter code: Metal transporter cnnm-1 (811 aa).

An N-terminal signal peptide occupies residues Met-1–Ala-24. Asn-20, Asn-49, Asn-61, and Asn-122 each carry an N-linked (GlcNAc...) asparagine glycan. The Extracellular segment spans residues Gln-25–Gln-204. Residues Tyr-197 to Leu-376 enclose the CNNM transmembrane domain. A helical transmembrane segment spans residues Ile-205 to Leu-225. The Cytoplasmic segment spans residues Met-226–Asn-259. A helical membrane pass occupies residues Leu-260–Met-280. At Gly-281–Thr-284 the chain is on the extracellular side. Residues Thr-285 to Pro-305 form a helical membrane-spanning segment. Residues Gln-306–Glu-315 lie on the Cytoplasmic side of the membrane. Residues Val-316–Trp-336 form a helical membrane-spanning segment. At Pro-337–Pro-811 the chain is on the extracellular side. CBS domains follow at residues Met-394–Val-456 and Tyr-462–Glu-530. N-linked (GlcNAc...) asparagine glycans are attached at residues Asn-435 and Asn-453. The interval Asp-741 to Gly-760 is disordered. Over residues Ser-743–Leu-755 the composition is skewed to low complexity. 2 N-linked (GlcNAc...) asparagine glycosylation sites follow: Asn-745 and Asn-752.

It belongs to the ACDP family. In terms of tissue distribution, highly expressed in the intestine and in neurons, but it is also expressed in a variety of tissues including the pharynx, hypodermis, rectum and in muscles.

It localises to the basolateral cell membrane. Functionally, probable metal transporter. Probably acts redundantly with the other metal transport proteins cnnm-2, cnnm-3, cnnm-4 and cnnm-5 to regulate Mg(2+) homeostasis. Promotes postembryonic gonad development by regulating Mg(2+) levels, probably via AMPK signaling. This chain is Metal transporter cnnm-1, found in Caenorhabditis elegans.